A 648-amino-acid chain; its full sequence is Spastin (648 aa).

Residues 1–40 (MASTVALLRDSSDDRENFDDGETDCVQVGRKRKLTVFFYP) lie on the Cytoplasmic side of the membrane. The segment at residues 41-61 (LLLVFWLLRWVFYQFFLVLCF) is an intramembrane region (helical). Topologically, residues 62 to 648 (VCRGFVPRRH…WNREFGDITV (587 aa)) are cytoplasmic. The 76-residue stretch at 99 to 174 (HKKAFDFISK…EMARDRLDFL (76 aa)) folds into the MIT domain. Residues 188-346 (PWHGGVAPAQ…SQRSLLSSRV (159 aa)) form a disordered region. Low complexity predominate over residues 247 to 266 (TGVTLRRQQQQQLGGVSTVS). 414–421 (GPPGNGKT) is a binding site for ATP.

The protein belongs to the AAA ATPase family. Spastin subfamily. Homohexamer. The homohexamer is stabilized by ATP-binding. The homohexamer may adopt a ring conformation through which microtubules pass prior to being severed. Interacts with microtubules.

It is found in the membrane. It localises to the cytoplasm. Its subcellular location is the cytoskeleton. The protein localises to the microtubule organizing center. The protein resides in the centrosome. The enzyme catalyses n ATP + n H2O + a microtubule = n ADP + n phosphate + (n+1) alpha/beta tubulin heterodimers.. In terms of biological role, ATP-dependent microtubule severing protein. Microtubule severing may promote reorganization of cellular microtubule arrays and the release of microtubules from the microtubule organizing center following nucleation. The chain is Spastin (spas) from Ixodes scapularis (Black-legged tick).